We begin with the raw amino-acid sequence, 269 residues long: MNLNNLENIRYNEIKEFSDKIKKEFTFSQKKQVMDIIEKLNKDSRKNVIKLGQALEKFLNKYEEELKRTNNMYNFDRRYGNNYLIAGVDEVGRGPLAGPIVAAAVVLDLNVEEMQRVFNIKDSKKLSEKKREELDIIIREKAISYNIALVDNKTIDERGISWSNNEVLKRAVEGLKVKPDLVLSDGYAVKNLNIRNEFIIKGDSKSISIASSSIIAKVYRDSMMKEYSKGLNMYGFNHNAGYGTEEHVQAIKKHGPSKIHRMSFLTNIL.

Positions 83-269 (YLIAGVDEVG…HRMSFLTNIL (187 aa)) constitute an RNase H type-2 domain. The a divalent metal cation site is built by Asp89, Glu90, and Asp185.

This sequence belongs to the RNase HII family. The cofactor is Mn(2+). Requires Mg(2+) as cofactor.

It localises to the cytoplasm. It catalyses the reaction Endonucleolytic cleavage to 5'-phosphomonoester.. Functionally, endonuclease that specifically degrades the RNA of RNA-DNA hybrids. The chain is Ribonuclease HII from Clostridium botulinum (strain ATCC 19397 / Type A).